A 601-amino-acid chain; its full sequence is Nuclear receptor subfamily 2 group C member 1 (601 aa).

Positions 1–179 (MATIEEIAHQ…RLQRCIAFGM (179 aa)) are required for interaction with KAT2B. A DNA-binding region (nuclear receptor) is located at residues 111–186 (FDLCVVCGDK…FGMKQDSVQC (76 aa)). NR C4-type zinc fingers lie at residues 114-134 (CVVC…CEGC) and 150-169 (CRGS…CQYC). Ser198 and Ser216 each carry phosphoserine. Thr221 bears the Phosphothreonine mark. Thr223 is modified (phosphothreonine; by MAPK1). Residue Lys251 forms a Glycyl lysine isopeptide (Lys-Gly) (interchain with G-Cter in SUMO); alternate linkage. A Glycyl lysine isopeptide (Lys-Gly) (interchain with G-Cter in SUMO2); alternate cross-link involves residue Lys251. In terms of domain architecture, NR LBD spans 349-591 (GSVHLITGDS…SVIPHILKME (243 aa)). Ser582 carries the post-translational modification Phosphoserine; by PKC. The required for interaction with NRIP1 stretch occupies residues 585-601 (PHILKMEPGQYSKTSSL). Residue Lys589 forms a Glycyl lysine isopeptide (Lys-Gly) (interchain with G-Cter in SUMO2) linkage.

This sequence belongs to the nuclear hormone receptor family. NR2 subfamily. As to quaternary structure, homodimer. Heterodimer; with NR2C2 which is required for chromatin remodeling and for binding to promoter regions such as globin DR1 repeats. Interacts with ESR1; the interaction prevents homodimerization of ESR1 and suppresses its transcriptional activity and cell growth. Interacts with NRIP1 (via its LXXLL motifs); the interaction provides corepressor activity. Interacts with HDAC3 (via the DNA-binding domain); the interaction recruits phosphorylated NR2C1 to PML bodies for sumoylation. Interacts with HDAC4 (via the DNA-binding domain). Interacts with PIAS1; the interaction is required for sumoylation of NR2C1. Interacts with UBE2I; the interaction is required for sumoylation of NR2C1. Interacts with KAT2B; the interaction acts as a corepressor of gene expression. Post-translationally, sumoylation requires both PIAS1 and UBE2I. Sumoylation appears to dissociate NR2C1 from the PML nuclear bodies. Enhances the interaction with NRIP1 but inhibits interaction with KAT2B. In proliferating cells, stimulation by all-trans retinoic acid, activation of MAPK1-mediated phosphorylation and recruitment to PML bodies with subsequent sumoylation, suppresses OCT4 expression. Phosphorylated on several serine and threonine residues. Phosphorylation on Thr-223, stimulated by all-trans retinoic acid (atRA) mediates PML location and sumoylation in proliferating cells which then modulates its association with effector molecules, KAT2B and NRIP1. Phosphorylation on Ser-582 by PKC is important for protein stability and function as activator of RARB.

Its subcellular location is the nucleus. It is found in the PML body. Orphan nuclear receptor. Binds the IR7 element in the promoter of its own gene in an autoregulatory negative feedback mechanism. Primarily repressor of a broad range of genes including ESR1 and RARB. Together with NR2C2, forms the core of the DRED (direct repeat erythroid-definitive) complex that represses embryonic and fetal globin transcription. Binds to hormone response elements (HREs) consisting of two 5'-AGGTCA-3' half site direct repeat consensus sequences. Also activator of OCT4 gene expression. Plays a fundamental role in early embryogenesis and regulates embryonic stem cell proliferation and differentiation. Mediator of retinoic acid-regulated preadipocyte proliferation. This Pongo abelii (Sumatran orangutan) protein is Nuclear receptor subfamily 2 group C member 1 (NR2C1).